A 466-amino-acid chain; its full sequence is Communesin N16 acyltransferase cnsK (466 aa).

Belongs to the fumigaclavine B O-acetyltransferase family.

Its pathway is alkaloid biosynthesis. Functionally, communesin N16 acyltransferase; part of the gene cluster that mediates the biosynthesis of communesins, a prominent class of indole alkaloids with great potential as pharmaceuticals. Communesins are biosynthesized by the coupling of tryptamine and aurantioclavine, two building blocks derived from L-tryptophan. The L-tryptophan decarboxylase cnsB converts L-tryptophan to tryptamine, whereas the tryptophan dimethylallyltransferase cnsF converts L-tryptophan to 4-dimethylallyl tryptophan which is further transformed to aurantioclavine by the aurantioclavine synthase cnsA, probably aided by the catalase cnsD. The cytochrome P450 monooxygenase cnsC catalyzes the heterodimeric coupling between the two different indole moieties, tryptamine and aurantioclavine, to construct vicinal quaternary stereocenters and yield the heptacyclic communesin scaffold. The O-methyltransferase cnsE then methylates the communesin scaffold to produce communesin K, the simplest characterized communesin that contains the heptacyclic core. The dioxygenase cnsJ converts communesin K into communesin I. Acylation to introduce the hexadienyl group at position N16 of communesin I by the acyltransferase cnsK leads to the production of communesin B. The hexadienyl group is produced by the highly reducing polyketide synthase cnsI, before being hydrolytically removed from cnsI by the serine hydrolase cnsH, converted into hexadienyl-CoA by the CoA ligase cnsG, and then transferred to communesin I by cnsK. Surprisingly, cnsK may also be a promiscuous acyltransferase that can tolerate a range of acyl groups, including acetyl-, propionyl-, and butyryl-CoA, which lead to communesins A, G and H respectively. The roles of the alpha-ketoglutarate-dependent dioxygenases cnsM and cnsP have still to be determined. This chain is Communesin N16 acyltransferase cnsK, found in Penicillium expansum (Blue mold rot fungus).